A 367-amino-acid polypeptide reads, in one-letter code: Alanine racemase (367 aa).

K40 (proton acceptor; specific for D-alanine) is an active-site residue. K40 is subject to N6-(pyridoxal phosphate)lysine. R136 lines the substrate pocket. The Proton acceptor; specific for L-alanine role is filled by Y263. M310 lines the substrate pocket.

Belongs to the alanine racemase family. Requires pyridoxal 5'-phosphate as cofactor.

It catalyses the reaction L-alanine = D-alanine. Its pathway is amino-acid biosynthesis; D-alanine biosynthesis; D-alanine from L-alanine: step 1/1. Its function is as follows. Catalyzes the interconversion of L-alanine and D-alanine. May also act on other amino acids. The protein is Alanine racemase (alr) of Streptococcus suis (strain 98HAH33).